The following is a 474-amino-acid chain: Bifunctional protein HldE (474 aa).

Residues 1-318 (MKMTLPDFHC…ENAIRGRAET (318 aa)) form a ribokinase region. An ATP-binding site is contributed by 195–198 (NLSE). Asp-264 is a catalytic residue. The segment at 344–474 (MTNGCFDILH…TNIIKAIKNQ (131 aa)) is cytidylyltransferase.

The protein in the N-terminal section; belongs to the carbohydrate kinase PfkB family. It in the C-terminal section; belongs to the cytidylyltransferase family. In terms of assembly, homodimer.

The catalysed reaction is D-glycero-beta-D-manno-heptose 7-phosphate + ATP = D-glycero-beta-D-manno-heptose 1,7-bisphosphate + ADP + H(+). It carries out the reaction D-glycero-beta-D-manno-heptose 1-phosphate + ATP + H(+) = ADP-D-glycero-beta-D-manno-heptose + diphosphate. Its pathway is nucleotide-sugar biosynthesis; ADP-L-glycero-beta-D-manno-heptose biosynthesis; ADP-L-glycero-beta-D-manno-heptose from D-glycero-beta-D-manno-heptose 7-phosphate: step 1/4. The protein operates within nucleotide-sugar biosynthesis; ADP-L-glycero-beta-D-manno-heptose biosynthesis; ADP-L-glycero-beta-D-manno-heptose from D-glycero-beta-D-manno-heptose 7-phosphate: step 3/4. It participates in bacterial outer membrane biogenesis; LPS core biosynthesis. Catalyzes the phosphorylation of D-glycero-D-manno-heptose 7-phosphate at the C-1 position to selectively form D-glycero-beta-D-manno-heptose-1,7-bisphosphate. Functionally, catalyzes the ADP transfer from ATP to D-glycero-beta-D-manno-heptose 1-phosphate, yielding ADP-D-glycero-beta-D-manno-heptose. The sequence is that of Bifunctional protein HldE from Photorhabdus laumondii subsp. laumondii (strain DSM 15139 / CIP 105565 / TT01) (Photorhabdus luminescens subsp. laumondii).